Reading from the N-terminus, the 2118-residue chain is MSSSRGSLRALLLAAAAAAAAAAGAVSNKLGYWFSCRRFGLDCPEQLEWRHWNPGTEYVKQLVLKNVSTSVLKIRFKQPTSKAFGMDFPEPFKLRPGMSQPLKVVFRPLKQQHYSDNVELFVGNVSCLVPVHAYTPVTHIEVPPALDFGFTPTKETVTAQLPVRNTGDVRVDVLWKLDAPFSISPLFASLAPGEVVAFTASFTPPEACSYTASAACQLESGAAAICKISGIGKFPYLSVEQAGVDFGAVVVGQRVERLVRFGNHSVVPAHFAVTHDEAGPDDGVFTVGPARGTLGPEEYSMLKLSYTPRATGTFSSETFHIGTAGGNRVALNLRGTAVAPLVTLSTRAFNFGNVAAGATASRVLYIRNHSAVPVPYDFQVDPLDVFAISRTRGVLAPDSTAHVTITFRPMAGLAANLWRRVTLLLKDAEPQGVDLVATAYTDKSRPPPLSQRHVERYMARVLSGGPAVEESQLDSKPPSAATGDPAAALTVDSDALDFGSCSRLSASEYRSVTVTNHTPAKLTAFVLVPEWADPGAAPGDAPQRVFQVFPESADMRPYGQATFKVAFRPPRDAAFFSQQLALVAHTKSQRNFRLVAEHQVLPAWCVPLRATGNTFLHSNPEFGPKVELSSRAVAFPPCRPGERVHQTLLIANSGDTPVAFSFGAAGAALGPLFSAKPAAGVVPPQGHVLVALRFAPTDTRPAAANALVTFNGVASNAVSVSLRGAAHTPRLTTDLPSSTLYFRPTCVGASSQRAVTLHNPSRVPVAFRWRLPARLQGLVTVSPAAGALRGNESVQLQWSFTPAAQKLYEARAACLVMSPPEAANGNAAGATASAASLFPGAGLATGIEWYEGAGATAALAGMGEEEAADAVLLSLVGEGTQGAVALEPPSLELGDLRVGHPVRRPLLLQNCSDGVLRYSLEVGPAEDDQPPAGDATLVDFTAGLDSAAEGGVGGGAGGAGGAALECWVDEPEGALPARASKTVMVTLFPRYRKRYSLQVRCRSSTVAPLLTGPNRPPSGGAGPRPLDAGSEAAAAAAAAAAAAAAPLPPPVIAPLTASTTFPTLEVTDVYCEGLPKQLLWQLLGLNDLNHHLRTEVTATELRLRAAQDRGALTTEAASAAMRPFLMEFGTHGLGGRPRVVHVEISNPTPLPASWQLHSFDDPDGVELENWVEPGRPRTEGERMRDLIAEYKLFEMRPRSGELEPGARCTVTIEFRPSVEGSFELPVFLHITDGKRLRLQLQAVTTPEPLQLLALPPPLRTFRLEPVALGERAPPLQMYVLRNGGPAPLHWRLDTAPLAALAEASWGHPVLELVGPEEGDIEEGGVAAINWRFSPLEAKEYRVEVPVLLGDGGIEVIELLGRGFAPPPAPPHGAAAVQLIGPGAATSPAAPTTAAEDDDTPAAALDSVGGDAEAEAARAAAAADRDWITWRGLSSAPSAGMAGRLALVDHDLVSLGVTPVRGLTRRIIVLTNKSRYPLAFDWDLGCLAPPPPPGLAATQRAAAASAMMGLGGGSLLPASQLQLLAGRPLQGALAISPAAGSLEPGERLVCRVSLHAGVTPQVFEGEVRCHVRIDDDAVAEAEAAAAAAAAAGAAAVAAELPFVEQVEEVIAEAPVRGPPAPPPAVAAAQRASRLRSRLPVHQYMTTAVRTRIEPLNAAFTATMEARTRRLADATRPPSWPEPQSISVTLRGRILDERQLGALRYVPPHERAAARAAVVAGAAWVPPAMVPFWEEEGRSTPAVSAQPSSQGGGGYGVGGYGGGYGSGGSQGGEASVAPSGGDPGGYSPRGGMADSWPSLEPGLGMEETVVGPPTVGLDLSLSLQHAGGAGGAPGGDGDSDSRPGTPSMTAAAHHHHHHPRHAGPAPGSGTAEVMEVTFSGDQQPTGGPMPSPPSISGAPDPDSATPDDDFATSDAAVNAAAAVRAAGGGMGSPQPVDPGGSAAAAASELAPPALPPAPPRGGDIEYDALVSAREVLAGLFAELMEDADVVRAVAFLPEHEVPSFAEVRATPPPCYDPAVRAAAEAARAEAEARAAAEAATKAAAEAEAGAAFAIPAAAAQAATEPPALEDELAADTELARVLVAPEWRAFADFVLESAVLGLMQESAAGDWEMPEEEVGR.

The chain crosses the membrane as a helical span at residues 6 to 26 (GSLRALLLAAAAAAAAAAGAV). The 122-residue stretch at 615–736 (FLHSNPEFGP…HTPRLTTDLP (122 aa)) folds into the MSP domain. Disordered regions lie at residues 1007–1029 (APLL…LDAG), 1764–1909 (SGGS…DDFA), and 1924–1958 (AGGG…APPR). Over residues 1825–1834 (GGAGGAPGGD) the composition is skewed to gly residues. Positions 1840–1849 (RPGTPSMTAA) are enriched in low complexity. Basic residues predominate over residues 1850–1859 (AHHHHHHPRH). Low complexity-rich tracts occupy residues 1892–1902 (SISGAPDPDSA) and 1936–1949 (PGGS…ELAP). The stretch at 2016 to 2045 (AVRAAAEAARAEAEARAAAEAATKAAAEAE) forms a coiled coil.

It belongs to the CFAP65 family.

Its subcellular location is the cell projection. It is found in the cilium. The protein localises to the flagellum membrane. The protein resides in the cytoplasm. May play a role in flagellar formation and mobility. This is Cilia- and flagella-associated protein 65 from Chlamydomonas reinhardtii (Chlamydomonas smithii).